The primary structure comprises 337 residues: UDP-glucose 4-epimerase (337 aa).

Residues 11–12, 31–36, 58–59, 80–84, Asn-99, Ser-124, Tyr-149, Lys-153, and Phe-178 each bind NAD(+); these read YI, DNLSNA, DL, and FAGLK. 2 residues coordinate substrate: Ser-124 and Tyr-149. Catalysis depends on Tyr-149, which acts as the Proton acceptor. Substrate is bound by residues Asn-179, 199–200, 216–218, Arg-231, and 292–295; these read NL, GIF, and RDGD.

Belongs to the NAD(P)-dependent epimerase/dehydratase family. As to quaternary structure, homodimer. It depends on NAD(+) as a cofactor.

It carries out the reaction UDP-alpha-D-glucose = UDP-alpha-D-galactose. The protein operates within carbohydrate metabolism; galactose metabolism. Involved in the metabolism of galactose. Catalyzes the conversion of UDP-galactose (UDP-Gal) to UDP-glucose (UDP-Glc) through a mechanism involving the transient reduction of NAD. The chain is UDP-glucose 4-epimerase (galE) from Erwinia amylovora (Fire blight bacteria).